A 156-amino-acid polypeptide reads, in one-letter code: Small ribosomal subunit protein uS7 (156 aa).

The protein belongs to the universal ribosomal protein uS7 family. In terms of assembly, part of the 30S ribosomal subunit. Contacts proteins S9 and S11.

Its function is as follows. One of the primary rRNA binding proteins, it binds directly to 16S rRNA where it nucleates assembly of the head domain of the 30S subunit. Is located at the subunit interface close to the decoding center, probably blocks exit of the E-site tRNA. This chain is Small ribosomal subunit protein uS7, found in Cronobacter sakazakii (strain ATCC BAA-894) (Enterobacter sakazakii).